Here is a 156-residue protein sequence, read N- to C-terminus: UPF0039 protein Mb2876c (156 aa).

One can recognise an N-acetyltransferase domain in the interval 8–150 (VWAKDLDARA…PHVPMLRPGS (143 aa)).

Belongs to the UPF0039 (ElaA) family.

This is UPF0039 protein Mb2876c from Mycobacterium bovis (strain ATCC BAA-935 / AF2122/97).